Reading from the N-terminus, the 347-residue chain is Hydroxymethylglutaryl-CoA synthase (347 aa).

Asp29 and Ala30 together coordinate (3S)-3-hydroxy-3-methylglutaryl-CoA. Glu80 (proton donor/acceptor) is an active-site residue. 2 residues coordinate (3S)-3-hydroxy-3-methylglutaryl-CoA: Cys112 and Thr153. The active-site Acyl-thioester intermediate is the Cys112. Residue Arg199 participates in CoA binding. (3S)-3-hydroxy-3-methylglutaryl-CoA-binding residues include Thr201 and His234. Residue His234 is the Proton donor/acceptor of the active site. Lys239 serves as a coordination point for CoA. 3 residues coordinate (3S)-3-hydroxy-3-methylglutaryl-CoA: Arg243, Asn266, and Ser296.

It belongs to the thiolase-like superfamily. Archaeal HMG-CoA synthase family. In terms of assembly, interacts with acetoacetyl-CoA thiolase that catalyzes the precedent step in the pathway and with a DUF35 protein. The acetoacetyl-CoA thiolase/HMG-CoA synthase complex channels the intermediate via a fused CoA-binding site, which allows for efficient coupling of the endergonic thiolase reaction with the exergonic HMGCS reaction.

It carries out the reaction acetoacetyl-CoA + acetyl-CoA + H2O = (3S)-3-hydroxy-3-methylglutaryl-CoA + CoA + H(+). The protein operates within metabolic intermediate biosynthesis; (R)-mevalonate biosynthesis; (R)-mevalonate from acetyl-CoA: step 2/3. Catalyzes the condensation of acetyl-CoA with acetoacetyl-CoA to form 3-hydroxy-3-methylglutaryl-CoA (HMG-CoA). Functions in the mevalonate (MVA) pathway leading to isopentenyl diphosphate (IPP), a key precursor for the biosynthesis of isoprenoid compounds that are building blocks of archaeal membrane lipids. The sequence is that of Hydroxymethylglutaryl-CoA synthase from Methanocella arvoryzae (strain DSM 22066 / NBRC 105507 / MRE50).